A 357-amino-acid polypeptide reads, in one-letter code: Dual-specificity RNA methyltransferase RlmN (357 aa).

E89 (proton acceptor) is an active-site residue. Residues 109-340 (EREKYTVCVS…CTIRESKALD (232 aa)) form the Radical SAM core domain. C116 and C345 are joined by a disulfide. [4Fe-4S] cluster is bound by residues C123, C127, and C130. Residues 173 to 174 (GE), S203, 226 to 228 (SLH), and N302 each bind S-adenosyl-L-methionine. The active-site S-methylcysteine intermediate is C345.

The protein belongs to the radical SAM superfamily. RlmN family. [4Fe-4S] cluster serves as cofactor.

The protein localises to the cytoplasm. The enzyme catalyses adenosine(2503) in 23S rRNA + 2 reduced [2Fe-2S]-[ferredoxin] + 2 S-adenosyl-L-methionine = 2-methyladenosine(2503) in 23S rRNA + 5'-deoxyadenosine + L-methionine + 2 oxidized [2Fe-2S]-[ferredoxin] + S-adenosyl-L-homocysteine. It carries out the reaction adenosine(37) in tRNA + 2 reduced [2Fe-2S]-[ferredoxin] + 2 S-adenosyl-L-methionine = 2-methyladenosine(37) in tRNA + 5'-deoxyadenosine + L-methionine + 2 oxidized [2Fe-2S]-[ferredoxin] + S-adenosyl-L-homocysteine. Specifically methylates position 2 of adenine 2503 in 23S rRNA and position 2 of adenine 37 in tRNAs. m2A2503 modification seems to play a crucial role in the proofreading step occurring at the peptidyl transferase center and thus would serve to optimize ribosomal fidelity. The polypeptide is Dual-specificity RNA methyltransferase RlmN (Helicobacter pylori (strain ATCC 700392 / 26695) (Campylobacter pylori)).